Reading from the N-terminus, the 355-residue chain is Peptide chain release factor 1 (355 aa).

Q231 bears the N5-methylglutamine mark. Basic and acidic residues predominate over residues 280–291 (SERLAKESEARK). The interval 280-303 (SERLAKESEARKSQVGSGDRSERI) is disordered.

Belongs to the prokaryotic/mitochondrial release factor family. Methylated by PrmC. Methylation increases the termination efficiency of RF1.

It is found in the cytoplasm. Its function is as follows. Peptide chain release factor 1 directs the termination of translation in response to the peptide chain termination codons UAG and UAA. This is Peptide chain release factor 1 from Campylobacter jejuni subsp. jejuni serotype O:6 (strain 81116 / NCTC 11828).